A 484-amino-acid chain; its full sequence is tRNA sulfurtransferase (484 aa).

A THUMP domain is found at R63–Q167. ATP is bound by residues L185 to M186, K267, G289, and Q298. The cysteines at positions 346 and 457 are disulfide-linked. The 79-residue stretch at V405 to P483 folds into the Rhodanese domain. The active-site Cysteine persulfide intermediate is the C457.

It belongs to the ThiI family.

The protein localises to the cytoplasm. It catalyses the reaction [ThiI sulfur-carrier protein]-S-sulfanyl-L-cysteine + a uridine in tRNA + 2 reduced [2Fe-2S]-[ferredoxin] + ATP + H(+) = [ThiI sulfur-carrier protein]-L-cysteine + a 4-thiouridine in tRNA + 2 oxidized [2Fe-2S]-[ferredoxin] + AMP + diphosphate. It carries out the reaction [ThiS sulfur-carrier protein]-C-terminal Gly-Gly-AMP + S-sulfanyl-L-cysteinyl-[cysteine desulfurase] + AH2 = [ThiS sulfur-carrier protein]-C-terminal-Gly-aminoethanethioate + L-cysteinyl-[cysteine desulfurase] + A + AMP + 2 H(+). The protein operates within cofactor biosynthesis; thiamine diphosphate biosynthesis. Functionally, catalyzes the ATP-dependent transfer of a sulfur to tRNA to produce 4-thiouridine in position 8 of tRNAs, which functions as a near-UV photosensor. Also catalyzes the transfer of sulfur to the sulfur carrier protein ThiS, forming ThiS-thiocarboxylate. This is a step in the synthesis of thiazole, in the thiamine biosynthesis pathway. The sulfur is donated as persulfide by IscS. This chain is tRNA sulfurtransferase, found in Pseudomonas aeruginosa (strain UCBPP-PA14).